Here is a 117-residue protein sequence, read N- to C-terminus: Small ribosomal subunit protein uS17 (117 aa).

This sequence belongs to the universal ribosomal protein uS17 family. As to quaternary structure, part of the 30S ribosomal subunit.

Its function is as follows. One of the primary rRNA binding proteins, it binds specifically to the 5'-end of 16S ribosomal RNA. The sequence is that of Small ribosomal subunit protein uS17 from Methanocaldococcus jannaschii (strain ATCC 43067 / DSM 2661 / JAL-1 / JCM 10045 / NBRC 100440) (Methanococcus jannaschii).